Reading from the N-terminus, the 307-residue chain is UDP-N-acetylenolpyruvoylglucosamine reductase (307 aa).

An FAD-binding PCMH-type domain is found at 34–199 (RVGGPAQVLF…TAVRFRGTPS (166 aa)). The active site involves Arg-179. The active-site Proton donor is the Ser-228. The active site involves Glu-298.

It belongs to the MurB family. The cofactor is FAD.

The protein localises to the cytoplasm. The catalysed reaction is UDP-N-acetyl-alpha-D-muramate + NADP(+) = UDP-N-acetyl-3-O-(1-carboxyvinyl)-alpha-D-glucosamine + NADPH + H(+). The protein operates within cell wall biogenesis; peptidoglycan biosynthesis. Functionally, cell wall formation. The protein is UDP-N-acetylenolpyruvoylglucosamine reductase of Bradyrhizobium sp. (strain ORS 278).